Here is a 155-residue protein sequence, read N- to C-terminus: Ribonuclease H (155 aa).

In terms of domain architecture, RNase H type-1 spans 1–142 (MLKQVEIFTD…CDELARAAAS (142 aa)). Mg(2+)-binding residues include aspartate 10, glutamate 48, aspartate 70, and aspartate 134.

This sequence belongs to the RNase H family. As to quaternary structure, monomer. Mg(2+) is required as a cofactor.

The protein localises to the cytoplasm. It catalyses the reaction Endonucleolytic cleavage to 5'-phosphomonoester.. Endonuclease that specifically degrades the RNA of RNA-DNA hybrids. This chain is Ribonuclease H, found in Klebsiella pneumoniae subsp. pneumoniae (strain ATCC 700721 / MGH 78578).